The following is a 361-amino-acid chain: Palmitoyltransferase ZDHHC16 (361 aa).

Topologically, residues 1 to 77 are cytoplasmic; sequence MRGQRSLLLG…VYWLVDNVIR (77 aa). A helical transmembrane segment spans residues 78-98; that stretch reads WFGVVFVVLVIVLTGSIVAIA. Residues 99–116 lie on the Lumenal side of the membrane; it reads YLCVLPLILRTYSVPRLC. Residues 117–137 traverse the membrane as a helical segment; sequence WHFFYSHWNLILIVFHYYQAI. The Cytoplasmic segment spans residues 138–198; it reads TTPPGYPPQG…NNCVGHYNHR (61 aa). A DHHC domain is found at 155–205; sequence SICKKCIYPKPARTHHCSICNRCVLKMDHHCPWLNNCVGHYNHRYFFSFCF. Cys185 (S-palmitoyl cysteine intermediate) is an active-site residue. A helical transmembrane segment spans residues 199-219; that stretch reads YFFSFCFFMTLGCVYCSYGSW. At 220–250 the chain is on the lumenal side; it reads DLFREAYAAIETYHQTPPPTFSFRERITHKS. The chain crosses the membrane as a helical span at residues 251 to 271; the sequence is LVYLWFLCSSVALALGALTMW. At 272–361 the chain is on the cytoplasmic side; it reads HAVLISRGET…TAHSASVMAV (90 aa).

Belongs to the DHHC palmitoyltransferase family. In terms of assembly, interacts with ABL1. Interacts with COPS5. As to expression, ubiquitously expressed.

The protein resides in the endoplasmic reticulum membrane. It carries out the reaction L-cysteinyl-[protein] + hexadecanoyl-CoA = S-hexadecanoyl-L-cysteinyl-[protein] + CoA. Palmitoyl acyltransferase that mediates palmitoylation of proteins such as PLN and ZDHHC6. Required during embryonic heart development and cardiac function, possibly by mediating palmitoylation of PLN, thereby affecting PLN phosphorylation and homooligomerization. Also required for eye development. Palmitoylates ZDHHC6, affecting the quaternary assembly of ZDHHC6, its localization, stability and function. May play a role in DNA damage response. May be involved in apoptosis regulation. Involved in the proliferation of neural stem cells by regulating the FGF/ERK pathway. The sequence is that of Palmitoyltransferase ZDHHC16 from Mus musculus (Mouse).